Consider the following 336-residue polypeptide: Dihydroorotate dehydrogenase (quinone) (336 aa).

FMN-binding positions include 62 to 66 (AGLDK) and Thr-86. A substrate-binding site is contributed by Lys-66. A substrate-binding site is contributed by 111–115 (NRMGF). FMN is bound by residues Asn-139 and Asn-172. Substrate is bound at residue Asn-172. Ser-175 (nucleophile) is an active-site residue. Residue Asn-177 participates in substrate binding. Residues Lys-217 and Thr-245 each coordinate FMN. 246–247 (NT) is a binding site for substrate. Residues Gly-268, Gly-297, and 318-319 (YS) contribute to the FMN site.

The protein belongs to the dihydroorotate dehydrogenase family. Type 2 subfamily. In terms of assembly, monomer. The cofactor is FMN.

It localises to the cell membrane. It catalyses the reaction (S)-dihydroorotate + a quinone = orotate + a quinol. It functions in the pathway pyrimidine metabolism; UMP biosynthesis via de novo pathway; orotate from (S)-dihydroorotate (quinone route): step 1/1. Functionally, catalyzes the conversion of dihydroorotate to orotate with quinone as electron acceptor. This Serratia proteamaculans (strain 568) protein is Dihydroorotate dehydrogenase (quinone).